Here is a 350-residue protein sequence, read N- to C-terminus: Ceramide synthase 1 (350 aa).

The residue at position 2 (alanine 2) is an N-acetylalanine. A run of 6 helical transmembrane segments spans residues 53-73 (AHLA…WTAL), 103-123 (AWKL…LLGT), 148-168 (IAVA…ATVY), 176-196 (SVVM…SYAF), 239-259 (VANL…LYWF), and 287-307 (LLLL…AFAA). The TLC domain occupies 97 to 311 (ARLPESAWKL…IVAFAAKVLT (215 aa)).

Acetylated. Deacetylation by SIRT3 increases enzyme activity and promotes mitochondrial ceramide accumulation. In terms of tissue distribution, expressed in brain, skeletal muscle, heart and perigonadal white adipose tissue.

Its subcellular location is the endoplasmic reticulum membrane. It carries out the reaction a sphingoid base + octadecanoyl-CoA = an N-octadecanoyl-sphingoid base + CoA + H(+). It catalyses the reaction sphinganine + octadecanoyl-CoA = N-(octadecanoyl)-sphinganine + CoA + H(+). The enzyme catalyses hexadecasphinganine + octadecanoyl-CoA = N-octadecanoylhexadecasphinganine + CoA + H(+). The catalysed reaction is sphing-4-enine + octadecanoyl-CoA = N-octadecanoylsphing-4-enine + CoA + H(+). It carries out the reaction heptadecasphing-4-enine + octadecanoyl-CoA = N-octadecanoyl-heptadecasphing-4-enine + CoA + H(+). It catalyses the reaction 2-hydroxyoctadecanoyl-CoA + sphinganine = N-(2-hydroxyoctadecanoyl)-sphinganine + CoA + H(+). The enzyme catalyses eicosanoyl-CoA + sphinganine = N-eicosanoylsphinganine + CoA + H(+). It participates in lipid metabolism; sphingolipid metabolism. With respect to regulation, inhibited by fumonisin B1. Its function is as follows. Ceramide synthase that catalyzes the transfer of the acyl chain from acyl-CoA to a sphingoid base, with high selectivity toward stearoyl-CoA (octadecanoyl-CoA; C18:0-CoA). N-acylates sphinganine and sphingosine bases to form dihydroceramides and ceramides in de novo synthesis and salvage pathways, respectively. Plays a predominant role in skeletal muscle in regulating C18 ceramide and dihydroceramide levels with an impact on whole-body glucose metabolism and insulin sensitivity. Protects from diet-induced obesity by suppressing the uptake of glucose in multiple organs in a FGF21-dependent way. Generates C18 ceramides in the brain, playing a critical role in cerebellar development and Purkinje cell function. In response to cellular stress mediates mitophagy, a known defense mechanism against cell transformation and aging. Upon mitochondria fission, generates C18 ceramides that anchor lipidated MAP1LC3B/LC3B-II autophagolysosomes to outer mitochondrial membranes to eliminate damaged mitochondria. The chain is Ceramide synthase 1 from Mus musculus (Mouse).